The primary structure comprises 255 residues: Homeobox protein DLX-1 (255 aa).

Positions 1-14 (MTMTTMPESLNSPV) are enriched in polar residues. Disordered regions lie at residues 1–38 (MTMT…MSHG) and 95–118 (SLAQ…EGGE). The segment covering 25–36 (PPNQQMSPSPMS) has biased composition (low complexity). Over residues 100 to 112 (RLEDPGADSEKST) the composition is skewed to basic and acidic residues. Positions 128 to 187 (IRKPRTIYSSLQLQALNRRFQQTQYLALPERAELAASLGLTQTQVKIWFQNKRSKFKKLM) form a DNA-binding region, homeobox. The segment at 204-233 (ALSAGSPPVPPGWNPNSSSGKGSGSSAGSY) is disordered. Positions 217-232 (NPNSSSGKGSGSSAGS) are enriched in low complexity.

The protein belongs to the distal-less homeobox family. Interacts with SMAD4 (via homeobox DNA-binding domain). Interacts (via homeobox DNA-binding domain) with POU4F2; this interaction suppresses DLX1-mediated transcriptional activity in postnatal retina and enhances retinal ganglion cell (RGC) differentiation. In terms of tissue distribution, expressed in a restricted region of the developing brain, within the diencephalon and the adjacent telencephalic regions.

It is found in the nucleus. In terms of biological role, plays a role as a transcriptional activator or repressor. Inhibits several cytokine signaling pathways, such as TGFB1, activin-A/INHBA and BMP4 by interfering with the transcriptional stimulatory activity of transcription factors, such as MSX2, FAST2, SMAD2 and SMAD3 during hematopoietic cell differentiation. Plays a role in terminal differentiation of interneurons, such as amacrine and bipolar cells in the developing retina. Likely to play a regulatory role in the development of the ventral forebrain. May play a role in craniofacial patterning and morphogenesis and may be involved in the early development of diencephalic subdivisions. The protein is Homeobox protein DLX-1 (Dlx1) of Mus musculus (Mouse).